A 64-amino-acid chain; its full sequence is Lantibiotic actagardine (64 aa).

Residues 1-45 (MSALAIEKSWKDVDLRDGATSHPAGLGFGELTFEDLREDRTIYAA) constitute a propeptide that is removed on maturation. Residues 46-51 (SSGWVC) constitute a cross-link (lanthionine (Ser-Cys)). 2 cross-links (beta-methyllanthionine (Thr-Cys)) span residues 52-57 (TLTIEC) and 54-62 (TIECGTVIC). A cross-link (beta-methyllanthionine sulfoxide (Thr-Cys)) is located at residues 59-64 (TVICAC).

The protein belongs to the type B lantibiotic family. Post-translationally, maturation of lantibiotics involves the enzymatic conversion of Thr, and Ser into dehydrated AA by the enzyme garM and the formation of thioether bonds with cysteine. The 59-64 beta-methyllanthionine thioether bond is oxidized to a sulfoxide by the monooxygenase GarO. This is followed by membrane translocation and cleavage of the modified precursor. In terms of processing, the sulfoxide group of the 59-64 beta-methyllanthionine thioether bond is mildly important for activity, since the antibacterial activity of deoxyactagardine is marginally lower compared with oxidized actagardine.

Its function is as follows. Has potent antibacterial activity against some Gram-positive bacteria. Has good antistreptococcal activity. Inhibits cell wall biosynthesis by binding to lipid II and blocking transglycosylation. This Actinoplanes garbadinensis protein is Lantibiotic actagardine.